The primary structure comprises 342 residues: Methionyl-tRNA formyltransferase (342 aa).

Residue 110 to 113 (SLLP) participates in (6S)-5,6,7,8-tetrahydrofolate binding.

Belongs to the Fmt family.

It carries out the reaction L-methionyl-tRNA(fMet) + (6R)-10-formyltetrahydrofolate = N-formyl-L-methionyl-tRNA(fMet) + (6S)-5,6,7,8-tetrahydrofolate + H(+). In terms of biological role, attaches a formyl group to the free amino group of methionyl-tRNA(fMet). The formyl group appears to play a dual role in the initiator identity of N-formylmethionyl-tRNA by promoting its recognition by IF2 and preventing the misappropriation of this tRNA by the elongation apparatus. This Synechococcus sp. (strain CC9311) protein is Methionyl-tRNA formyltransferase.